A 487-amino-acid chain; its full sequence is N-succinylglutamate 5-semialdehyde dehydrogenase (487 aa).

221–226 is a binding site for NAD(+); sequence GSSRTG. Catalysis depends on residues Glu244 and Cys278.

Belongs to the aldehyde dehydrogenase family. AstD subfamily.

The enzyme catalyses N-succinyl-L-glutamate 5-semialdehyde + NAD(+) + H2O = N-succinyl-L-glutamate + NADH + 2 H(+). It functions in the pathway amino-acid degradation; L-arginine degradation via AST pathway; L-glutamate and succinate from L-arginine: step 4/5. Catalyzes the NAD-dependent reduction of succinylglutamate semialdehyde into succinylglutamate. This Pseudomonas putida (strain W619) protein is N-succinylglutamate 5-semialdehyde dehydrogenase.